Here is a 658-residue protein sequence, read N- to C-terminus: UvrABC system protein C (658 aa).

The region spanning 62 to 140 (PKPGVYRMLD…IKRFRPPYNV (79 aa)) is the GIY-YIG domain. The UVR domain occupies 250 to 285 (GAVQREIEAQMHKAAEDLDFERAAMLRDRLRAATFI).

It belongs to the UvrC family. Interacts with UvrB in an incision complex.

The protein localises to the cytoplasm. In terms of biological role, the UvrABC repair system catalyzes the recognition and processing of DNA lesions. UvrC both incises the 5' and 3' sides of the lesion. The N-terminal half is responsible for the 3' incision and the C-terminal half is responsible for the 5' incision. In Novosphingobium aromaticivorans (strain ATCC 700278 / DSM 12444 / CCUG 56034 / CIP 105152 / NBRC 16084 / F199), this protein is UvrABC system protein C.